We begin with the raw amino-acid sequence, 453 residues long: Ribulose bisphosphate carboxylase large chain (453 aa).

A propeptide spanning residues 1-2 is cleaved from the precursor; it reads MS. At Pro3 the chain carries N-acetylproline. The residue at position 14 (Lys14) is an N6,N6,N6-trimethyllysine. Asn123 and Thr173 together coordinate substrate. Residue Lys175 is the Proton acceptor of the active site. Lys177 provides a ligand contact to substrate. Mg(2+) contacts are provided by Lys201, Asp203, and Glu204. Lys201 is modified (N6-carboxylysine). His294 acts as the Proton acceptor in catalysis. 3 residues coordinate substrate: Arg295, His327, and Ser379.

It belongs to the RuBisCO large chain family. Type I subfamily. As to quaternary structure, heterohexadecamer of 8 large chains and 8 small chains; disulfide-linked. The disulfide link is formed within the large subunit homodimers. Mg(2+) serves as cofactor. The disulfide bond which can form in the large chain dimeric partners within the hexadecamer appears to be associated with oxidative stress and protein turnover.

It is found in the plastid. It localises to the chloroplast. It carries out the reaction 2 (2R)-3-phosphoglycerate + 2 H(+) = D-ribulose 1,5-bisphosphate + CO2 + H2O. The catalysed reaction is D-ribulose 1,5-bisphosphate + O2 = 2-phosphoglycolate + (2R)-3-phosphoglycerate + 2 H(+). Functionally, ruBisCO catalyzes two reactions: the carboxylation of D-ribulose 1,5-bisphosphate, the primary event in carbon dioxide fixation, as well as the oxidative fragmentation of the pentose substrate in the photorespiration process. Both reactions occur simultaneously and in competition at the same active site. The polypeptide is Ribulose bisphosphate carboxylase large chain (Cruciata glabra (Slender crosswort)).